The chain runs to 155 residues: RNA pyrophosphohydrolase (155 aa).

In terms of domain architecture, Nudix hydrolase spans 6–148; that stretch reads GYRANVAIVL…KQEVYRKALT (143 aa). A Nudix box motif is present at residues 38 to 59; that stretch reads GGVDTGETPLQAMYRELHEEIG.

This sequence belongs to the Nudix hydrolase family. RppH subfamily. It depends on a divalent metal cation as a cofactor.

Functionally, accelerates the degradation of transcripts by removing pyrophosphate from the 5'-end of triphosphorylated RNA, leading to a more labile monophosphorylated state that can stimulate subsequent ribonuclease cleavage. The protein is RNA pyrophosphohydrolase of Francisella tularensis subsp. mediasiatica (strain FSC147).